The following is a 183-amino-acid chain: Orotate phosphoribosyltransferase (183 aa).

Residues Arg21, Lys88, and 112–120 contribute to the 5-phospho-alpha-D-ribose 1-diphosphate site; that span reads EDVVTTGES. Positions 116 and 144 each coordinate orotate.

It belongs to the purine/pyrimidine phosphoribosyltransferase family. PyrE subfamily. In terms of assembly, homodimer. Mg(2+) is required as a cofactor.

The enzyme catalyses orotidine 5'-phosphate + diphosphate = orotate + 5-phospho-alpha-D-ribose 1-diphosphate. It participates in pyrimidine metabolism; UMP biosynthesis via de novo pathway; UMP from orotate: step 1/2. Functionally, catalyzes the transfer of a ribosyl phosphate group from 5-phosphoribose 1-diphosphate to orotate, leading to the formation of orotidine monophosphate (OMP). The chain is Orotate phosphoribosyltransferase from Thermus thermophilus (strain ATCC 27634 / DSM 579 / HB8).